The following is a 439-amino-acid chain: Secreted aspartic protease FUS4 (439 aa).

An N-terminal signal peptide occupies residues 1-22 (MLTIATLHVALQVFGAFSPSHA). The Peptidase A1 domain occupies 49–434 (YLFNVTVGSP…NFEDRSFGLA (386 aa)). N52 and N61 each carry an N-linked (GlcNAc...) asparagine glycan. The active site involves D67. N-linked (GlcNAc...) asparagine glycans are attached at residues N101, N107, and N123. D296 is an active-site residue. The cysteines at positions 352 and 390 are disulfide-linked.

The protein belongs to the peptidase A1 family.

It is found in the secreted. Its function is as follows. Secreted aspartic protease; part of the gene cluster that mediates the biosynthesis of the mycotoxin fusarin C. Within the cluster, FUS1, FUS2, FUS8 and FUS9 are sufficient for fusarin production. The other FUS cluster members are not essential for fusarin C biosynthesis. The polypeptide is Secreted aspartic protease FUS4 (Gibberella moniliformis (strain M3125 / FGSC 7600) (Maize ear and stalk rot fungus)).